Reading from the N-terminus, the 723-residue chain is ATP-dependent DNA helicase RRM3 (723 aa).

Disordered stretches follow at residues 1-31 (MFRS…SGSH) and 61-101 (DLES…DDDP). Phosphoserine is present on Ser64. Positions 83-96 (NNSSSLFSQSQGSF) are enriched in low complexity. 254-261 (GSAGTGKS) contributes to the ATP binding site. A DNA-binding region spans residues 682 to 701 (QVYVALSRAVTMDTLQVLNF).

It belongs to the helicase family. In terms of assembly, interacts with DEF1 and POL30.

It localises to the nucleus. It is found in the chromosome. The protein localises to the telomere. The catalysed reaction is Couples ATP hydrolysis with the unwinding of duplex DNA at the replication fork by translocating in the 5'-3' direction. This creates two antiparallel DNA single strands (ssDNA). The leading ssDNA polymer is the template for DNA polymerase III holoenzyme which synthesizes a continuous strand.. The enzyme catalyses ATP + H2O = ADP + phosphate + H(+). Functionally, 5' to 3' DNA replicative helicase recruited to paused replisomes to promote fork progression throughout nonhistone protein-DNA complexes, naturally occurring impediments that are encountered in each S phase where replication forks pauses. Needed for normal fork progression through over 1000 discrete sites scattered throughout the genome, like rDNA, tRNA genes, centromeres, active replication origins, or transcriptional silencers. Required for timely replication of the telomere and subtelomeric DNA and for wild-type levels of telomeric silencing. Involved in regulation of Ty1 transposition and protects the genome from instability at nascent sites of retrotransposition. Involved in DNA repair during stalled replication fork, regulation of fragile sites expression and essential for genome stability. Also plays a role in mtDNA replication. Has G-quadruplex (G4) unwinding activity and can suppress G4-induced genome instability when PIF1 levels are low. The protein is ATP-dependent DNA helicase RRM3 of Saccharomyces cerevisiae (strain ATCC 204508 / S288c) (Baker's yeast).